Reading from the N-terminus, the 295-residue chain is Ribosomal RNA small subunit methyltransferase A (295 aa).

S-adenosyl-L-methionine contacts are provided by Asn31, Leu33, Gly58, Glu79, Asp104, and Asn129.

The protein belongs to the class I-like SAM-binding methyltransferase superfamily. rRNA adenine N(6)-methyltransferase family. RsmA subfamily.

Its subcellular location is the cytoplasm. It catalyses the reaction adenosine(1518)/adenosine(1519) in 16S rRNA + 4 S-adenosyl-L-methionine = N(6)-dimethyladenosine(1518)/N(6)-dimethyladenosine(1519) in 16S rRNA + 4 S-adenosyl-L-homocysteine + 4 H(+). Functionally, specifically dimethylates two adjacent adenosines (A1518 and A1519) in the loop of a conserved hairpin near the 3'-end of 16S rRNA in the 30S particle. May play a critical role in biogenesis of 30S subunits. The protein is Ribosomal RNA small subunit methyltransferase A of Leuconostoc citreum (strain KM20).